Here is a 2417-residue protein sequence, read N- to C-terminus: Protein pad-1 (2417 aa).

Disordered regions lie at residues 409-437 (SSNSSSLKKSPRKIQQSLKNPRKPGDREG), 449-475 (SNKDDDVTSVTSSAAANASSAPPPDEE), 994-1029 (TSTGEDSGDPSAAGAAGILRSSSPDPDVVPAFDDDT), and 1957-2032 (SMSN…RRDP). Composition is skewed to low complexity over residues 456-468 (TSVTSSAAANASS) and 1002-1024 (DPSAAGAAGILRSSSPDPDVVPA). Residues 1969-1982 (DNPSGSTRNSTLSL) show a composition bias toward polar residues. Residues 2003–2014 (SKSENMKIEKKS) are compositionally biased toward basic and acidic residues. Polar residues predominate over residues 2015–2025 (SSNLRASIKDT).

It belongs to the DOP1 family.

Functionally, may be involved in protein traffic between late Golgi and early endosomes. Essential for cell patterning during gastrulation. The polypeptide is Protein pad-1 (pad-1) (Caenorhabditis elegans).